A 3412-amino-acid chain; its full sequence is MSGRKAQGKTLGVNMVRRGVRSLSNKIKQKTKQIGNRPGPSRGVQGFIFFFLFNILTGKKLTTHLKRLWRMLDPRQGLTVLRKVKRVVASLMRGLSSRKRRSSEMTMMPLLILSMVILGGGVTLVRKNRWLLLNVTAEDLGKTFSVGTGNCTTNILEAKYWCPDSMEYNCPNLSPREEPDDIDCWCYGVENVRVAYGRCDAVGRSKRSRRAIDLPTHENHGLKTRQEKWMTGRMGERQLQKIERWLVRNPFFAVTALAIAYLVGNNKTQRVVIALLVLAVGPAYSAHCIGITDRDFIEGVHGGTWVSASLEQDKCVTVMAPDKPSLDISLQTVAIDGPAEARKVCYSAVLTHVKINDKCPSTGEAHLAEENDGDNACKRTYSDRGWGNGCGLFGKGSIVACAKFTCAKSMSLFEVDQTKIQYVIRAQLHVGAKQENWNTDIKTLKFDALSGSQEAEFTGYGKATLECQVQTAVDFGNSYIAEMEKDSWIVDRQWAQDLTLPWQSGSGGIWREMHHLVEFEPPHAATIRVLALGNQEGSLKTALTGAMRVTKDENDNNLYKLHGGHVSCRVKLSALTLKGTSYKMCTDKMSFVKNPTDTGHGTVVMQVKVPKGAPCKIPVIVADDLTAAVNKGILVTVNPIASTNDDEVLIEVNPPFGDSYIIVGTGDSRLTYQWHKEGSSIGKLFTQTMKGVERLAVMGDAAWDFSSAGGFFTSVGKGIHTVFGSAFQGLFGGLSWITKVIMGAVLIWVGINTRNMTMSMSMILVGVIMMFLSLGVGADQGCAVNFGKRELKCGDGIFVFRDSDDWLTKYSYYPEDPVKLASIIKASYEEGKCGLNSVDSLEHEMWRSRADEINAIFEENEVDISIVVQDPKNIYQRGTHPFSRIRDGLQYGWKTWGKNLIFSPGRKNGSFIIDGKSRKECPFSNRVWNSFQIEEFGMGVFTTRVFMDAVFDYSVDCDGAILGAAVNGKKSAHGSPTFWMGSHEVNGTWMMHTLETLDYKECEWPLTHTIGTSVEESDMFMPRSIGGPVSSHNHIPGYKVQTNGPWMQVPLEVRREPCPGTSVVVDTSCDGRGKSTRSTTDSGKIIPEWCCRSCTMPPVSFHGSDGCWYPMEIRPMKTHESHLVRSWVTAGEVHAVPFGLVSMMIAMEVVLRKRQGPKQMLVGGIILLGAMLVGQVTMLDLVKLIVAVGLHFHEINNGGDAMYMALIASFSIRPGLLIGFGLRTLWSPRERLVMAFGAAMVEVALGGMMGGLWQYLNAVSLCVLTINAISSRKASNTILPLMALLTPVTMYEVRMATMLFCTVVIVGVLHQNSKDTSMQKTIPIVALTLTSYMGLTQPFLGLCAYMSTQVFGRRSIPVNEALAAAGLVGVLAGLAFQDMENFLGPIAVGGILMMLVSVAGKVDGLELKKLGEVSWEEEAEISGSSSRYDVALSEQGEFKLLSEDKVPWDQIVMTSLALVGAAIHPFALLLVLGGWVLHIKGARRSGDVLWDIPTPKVIEECEHLEDGIYGIFQSTFLGASQRGVGVAQGGVFHTMWHVTRGAFLLRNGKKLVPSWASVKEDLVAYGGSWKLDGKWDGEEEVQLIAAVPGKAVVNVQTKPSLFKVRNGGEIGAVALDYPSGTSGSPIVNRSGEVVGLYGNGILVGDNSFVSAISQTEVKEESKEELQEIPTMLKKGMTTILDFHPGAGKTRRFLPQILAECARRRLRTLVLAPTRVVLSEMKEAFHGLDVKFHTQAFSAHGSGKEVIDAMCHATLTYRMLEPTRVVNWEVIIMDEAHFLDPASIAARGWAAHRARANESATILMTATPPGTSDEFPHSNGEIEDVQTDIPSEPWTSGHEWILADKRPTAWFLPSIRAANVMAASLRKAGKNVVVLNRKTFEKEYPTIKQKRPDFILATDIAEMGANLCVERVLDCRTAYKPVLVDEGRKVAIKGPLRISASSAAQRRGRIGRNPNRDGDSYYYSEPTSEDNAHHVCWLEASMLLDNMEVRGGMVAPLYGIEGTKTPVSPGEMRLRDDQRRVFRELVRGCDLPVWLSWQVAKAGLKTNDRKWCFEGPEEHEILNDNGETVKCRSPGGAKKALRPRWCDERVSSDQSALADFIKFAEGRRGAAEMLVVLTELPDFLAKKGGEAMDTISVFLHSEEGSRAYRNALSMMPEAMTIVMLFILAGLLTSGMVIFFMSPKGMSRMSMAMGTMAGSGYLMFLGGVKPTHISYVMLIFFVLMVVIIPEPGQQRSIQDNQVAYLIIGILTLLSVVAANELGMLEKTKEDFFGKRNIATSGGTIPWSWPDLDLKPGAAWTVYVGIVTMLSPMLHHWIKVEYGNLSLSGIAQSASVLSFMDKGVPFMKMNISVVILLVSGWNSITVIPLLCGVGGAMLHWTLILPGIKAQQSKLAQKRVFHGVAKNPVVDGNPTADIEEAPEMPALYEKKLALYLLLALSLMSVAMCRTPFSLAEGIVLSSAALGPLIEGNTSLLWNGPMAVSMTGVMRGNYYAFVGVMYNLWKMKTGRRGSANGKTLGEVWKRELNLLDKQQFELYKRTDITEVDRDMARRHLAEGKVDTGVAVSRGTAKLRWFHERGYVKLEGRVMDLGCGRGGWCYYAAAQKEVSGVKGYTLGRDGHEKPMNVQSLGWNIVTFKDKTDIHRLEPAKCETLLCDIGESSPSSVTEGERTLRVLETVEKWLACGVDNFCVKVLAPYMPDVIEKLELLQRRFGGTVIRNPLSRNSTHEMYYVSGARSNITFTVNQTSRLLMRRMRRPTGKVTLEPDVILPIGTRSVETDKGPLDRGAIEERVERIKTEYAATWFHDNDNPYRTWHYCGSYITKTSGSAASMINGVIKILTFPWDRIEEVTRMAMTDTTPFGQQRVFKEKVDTRAKDPPAGTRKIMRVVNRWLFRHLAREKKPRLCTKEEFIAKVRSHAAIGAFLEEQEQWKTANEAVQDPKFWEMVDAERKLHQQGRCQSCVYNMMGKREKKLSEFGKAKGSRAIWYMWLGARFLEFEALGFLNEDHWASRENSGGGVEGIGLQYLGYVIKDLSTKEGGGFYADDTAGWDTRITEADLDDEQEIMSYMNAEQRKLAWAVMEMTYKNKVVKVLRPAPGGKAFMDIISRRDQRGSGQVVTYALNTITNLKVQLIRMAEAEMVINHQHVNECDESALARLDAWLAENGCDRLARMAVSGDDCVVKPVDDRFGLALSHLNAMSKVRKDISEWQPSKGWTDWESVPFCSHHFHELVLKDGRKVVVPCRDQDELIGRGRVSPGNGWMIKETACLSKAYANMWSLMYFHKRDMRLLSFAVSSAVPTAWVPSGRTTWSVHGKGEWMTTEDMLDVWNRVWVLNNPHMKDKTTVKEWRDVPYLTKRQDKLCGSLIGMTNRATWASHIHLVIHRIRNLIGQEKYTDYLTVMDRYSVDADLQPGELI.

The Cytoplasmic segment spans residues Met-1–Glu-104. The hydrophobic; homodimerization of capsid protein C stretch occupies residues Pro-38 to Leu-72. Residues Ser-102–Gly-121 constitute a propeptide, ER anchor for the capsid protein C, removed in mature form by serine protease NS3. Residues Met-105 to Val-125 traverse the membrane as a helical segment. Residues Arg-126–Arg-244 lie on the Extracellular side of the membrane. 2 N-linked (GlcNAc...) asparagine; by host glycosylation sites follow: Asn-134 and Asn-150. A helical membrane pass occupies residues Trp-245–Asn-265. Residues Asn-266 to Arg-270 are Cytoplasmic-facing. Residues Val-271–Ser-285 traverse the membrane as a helical segment. Residues Ala-286 to Leu-730 are Extracellular-facing. Cystine bridges form between Cys-288-Cys-315, Cys-345-Cys-401, Cys-345-Cys-406, Cys-359-Cys-390, Cys-377-Cys-401, Cys-377-Cys-406, Cys-467-Cys-568, and Cys-585-Cys-615. Residues Asp-383–Gly-396 form a fusion peptide region. The chain crosses the membrane as a helical span at residues Phe-731 to Ile-751. The Extracellular segment spans residues Asn-752–Thr-757. Residues Met-758 to Ala-778 form a helical membrane-spanning segment. The Extracellular segment spans residues Asp-779–Glu-1132. 6 cysteine pairs are disulfide-bonded: Cys-782–Cys-793, Cys-833–Cys-921, Cys-957–Cys-1002, Cys-1058–Cys-1107, Cys-1069–Cys-1091, and Cys-1090–Cys-1094. Residues Asn-908 and Asn-986 are each glycosylated (N-linked (GlcNAc...) asparagine; by host). The chain crosses the membrane as a helical span at residues Val-1133 to Lys-1153. Topologically, residues Arg-1154–Ala-1201 are cytoplasmic. Residues Met-1202–Leu-1222 traverse the membrane as a helical segment. The Lumenal portion of the chain corresponds to Arg-1223–Pro-1287. A helical membrane pass occupies residues Val-1288–Val-1308. The Cytoplasmic segment spans residues Leu-1309–Ser-1355. Residues Ile-1356–Phe-1376 form a helical membrane-spanning segment. Residues Gln-1377–Asp-1378 lie on the Lumenal side of the membrane. A helical transmembrane segment spans residues Met-1379–Ala-1399. Topologically, residues Gly-1400–Leu-1456 are cytoplasmic. An interacts with and activates NS3 protease region spans residues Leu-1407–Val-1446. The segment at residues Ala-1457–Leu-1477 is an intramembrane region (helical). Residues His-1478 to Ala-2157 lie on the Cytoplasmic side of the membrane. Positions Ser-1485–Leu-1665 constitute a Peptidase S7 domain. Residues His-1537, Asp-1561, and Ser-1622 each act as charge relay system; for serine protease NS3 activity in the active site. Residues Pro-1669–Gln-1825 enclose the Helicase ATP-binding domain. The interval Lys-1673–Met-1676 is important for RNA-binding. Phe-1682–Thr-1689 provides a ligand contact to ATP. Positions Asp-1773–His-1776 match the DEAH box motif. The Helicase C-terminal domain occupies Glu-1820–Tyr-1997. Lys-1877 carries the post-translational modification N6-acetyllysine; by host. The disordered stretch occupies residues Ala-1942–Tyr-1961. The helical transmembrane segment at Met-2158–Phe-2178 threads the bilayer. The Lumenal portion of the chain corresponds to Met-2179–Arg-2186. The segment at residues Met-2187–Lys-2207 is an intramembrane region (helical). Residues Pro-2208–Thr-2209 lie on the Lumenal side of the membrane. Residues His-2210–Gly-2230 form a helical membrane-spanning segment. Residues Gln-2231–Ala-2241 lie on the Cytoplasmic side of the membrane. The chain crosses the membrane as a helical span at residues Tyr-2242 to Leu-2262. The Lumenal segment spans residues Glu-2263 to Pro-2293. The segment at residues Gly-2294–Trp-2314 is an intramembrane region (helical). Residues Ile-2315–Ser-2360 are Lumenal-facing. Residues Ile-2361–Ile-2380 traverse the membrane as a helical segment. At Leu-2381–Pro-2421 the chain is on the cytoplasmic side. A helical transmembrane segment spans residues Ala-2422–Ala-2442. Topologically, residues Met-2443–Arg-2445 are lumenal. A helical transmembrane segment spans residues Thr-2446–Glu-2466. Residues Gly-2467–Leu-3411 are Cytoplasmic-facing. The mRNA cap 0-1 NS5-type MT domain maps to Gly-2508–Ser-2772. Ser-2563 contacts S-adenosyl-L-methionine. Position 2563 is a phosphoserine (Ser-2563). Lys-2568 serves as the catalytic For 2'-O-MTase activity. S-adenosyl-L-methionine is bound by residues Gly-2593, Trp-2594, Thr-2611, Leu-2612, Asp-2638, and Ile-2639. Asp-2653 functions as the For 2'-O-MTase activity in the catalytic mechanism. Ile-2654 contributes to the S-adenosyl-L-methionine binding site. Active-site for 2'-O-MTase activity residues include Lys-2689 and Glu-2725. Position 2727 (Tyr-2727) interacts with S-adenosyl-L-methionine. Positions Arg-2879–Arg-2912 match the Nuclear localization signal motif. Residues Glu-2946, His-2950, Cys-2955, and Cys-2958 each contribute to the Zn(2+) site. The RdRp catalytic domain maps to Gly-3036–Ala-3188. Zn(2+)-binding residues include His-3223, Cys-3239, and Cys-3358.

In the N-terminal section; belongs to the class I-like SAM-binding methyltransferase superfamily. mRNA cap 0-1 NS5-type methyltransferase family. As to quaternary structure, homodimer. Interacts (via N-terminus) with host EXOC1 (via C-terminus); this interaction results in EXOC1 degradation through the proteasome degradation pathway. Forms heterodimers with envelope protein E in the endoplasmic reticulum and Golgi. In terms of assembly, homodimer; in the endoplasmic reticulum and Golgi. Interacts with protein prM. Interacts with non-structural protein 1. As to quaternary structure, homodimer; Homohexamer when secreted. Interacts with envelope protein E. Interacts (via N-terminus) with serine protease NS3. In terms of assembly, forms a heterodimer with serine protease NS3. May form homooligomers. As to quaternary structure, forms a heterodimer with NS2B. Interacts with non-structural protein 2A (via N-terminus). Interacts with NS4B. Interacts with unphosphorylated RNA-directed RNA polymerase NS5; this interaction stimulates RNA-directed RNA polymerase NS5 guanylyltransferase activity. NS3 interacts with host PDCD6IP; this interaction contributes to virion release. Interacts with serine protease NS3. In terms of assembly, homodimer. Interacts with host STAT2; this interaction prevents the establishment of cellular antiviral state. Interacts with serine protease NS3. Interacts with host TRIM23; this interaction leads to NS5 ubiquitination. Post-translationally, specific enzymatic cleavages in vivo yield mature proteins. The nascent capsid protein C contains a C-terminal hydrophobic domain that act as a signal sequence for translocation of prM into the lumen of the ER. Mature capsid protein C is cleaved at a site upstream of this hydrophobic domain by NS3. prM is cleaved in post-Golgi vesicles by a host furin, releasing the mature small envelope protein M, and peptide pr. Non-structural protein 2A-alpha, a C-terminally truncated form of non-structural protein 2A, results from partial cleavage by NS3. Specific enzymatic cleavages in vivo yield mature proteins peptide 2K acts as a signal sequence and is removed from the N-terminus of NS4B by the host signal peptidase in the ER lumen. Signal cleavage at the 2K-4B site requires a prior NS3 protease-mediated cleavage at the 4A-2K site. In terms of processing, cleaved in post-Golgi vesicles by a host furin, releasing the mature small envelope protein M, and peptide pr. This cleavage is incomplete as up to 30% of viral particles still carry uncleaved prM. N-glycosylated. Post-translationally, N-glycosylated. The excreted form is glycosylated and this is required for efficient secretion of the protein from infected cells. In terms of processing, polyubiquitinated; ubiquitination is probably mediated by host TRIM23 and is prerequisite for NS5-STAT2 interaction. NS5 is not ISGylated or sumoylated. Acetylated by host KAT5. Acetylation modulates NS3 RNA-binding and unwinding activities and plays an important positive role for viral replication. Post-translationally, phosphorylated on serines residues. This phosphorylation may trigger NS5 nuclear localization.

Its subcellular location is the virion. It is found in the host nucleus. The protein resides in the host cytoplasm. The protein localises to the host perinuclear region. It localises to the secreted. Its subcellular location is the virion membrane. It is found in the host endoplasmic reticulum membrane. It catalyses the reaction Selective hydrolysis of -Xaa-Xaa-|-Yaa- bonds in which each of the Xaa can be either Arg or Lys and Yaa can be either Ser or Ala.. The enzyme catalyses RNA(n) + a ribonucleoside 5'-triphosphate = RNA(n+1) + diphosphate. The catalysed reaction is a ribonucleoside 5'-triphosphate + H2O = a ribonucleoside 5'-diphosphate + phosphate + H(+). It carries out the reaction ATP + H2O = ADP + phosphate + H(+). It catalyses the reaction a 5'-end (5'-triphosphoguanosine)-ribonucleoside in mRNA + S-adenosyl-L-methionine = a 5'-end (N(7)-methyl 5'-triphosphoguanosine)-ribonucleoside in mRNA + S-adenosyl-L-homocysteine. The enzyme catalyses a 5'-end (N(7)-methyl 5'-triphosphoguanosine)-ribonucleoside in mRNA + S-adenosyl-L-methionine = a 5'-end (N(7)-methyl 5'-triphosphoguanosine)-(2'-O-methyl-ribonucleoside) in mRNA + S-adenosyl-L-homocysteine + H(+). Plays a role in virus budding by binding to the cell membrane and gathering the viral RNA into a nucleocapsid that forms the core of a mature virus particle. During virus entry, may induce genome penetration into the host cytoplasm after hemifusion induced by the surface proteins. Can migrate to the cell nucleus where it modulates host functions. In terms of biological role, inhibits RNA silencing by interfering with host Dicer. Functionally, prevents premature fusion activity of envelope proteins in trans-Golgi by binding to envelope protein E at pH6.0. After virion release in extracellular space, gets dissociated from E dimers. Its function is as follows. Acts as a chaperone for envelope protein E during intracellular virion assembly by masking and inactivating envelope protein E fusion peptide. prM is the only viral peptide matured by host furin in the trans-Golgi network probably to avoid catastrophic activation of the viral fusion activity in acidic Golgi compartment prior to virion release. prM-E cleavage is inefficient, and many virions are only partially matured. These uncleaved prM would play a role in immune evasion. May play a role in virus budding. Exerts cytotoxic effects by activating a mitochondrial apoptotic pathway through M ectodomain. May display a viroporin activity. In terms of biological role, binds to host cell surface receptor and mediates fusion between viral and cellular membranes. Envelope protein is synthesized in the endoplasmic reticulum in the form of heterodimer with protein prM. They play a role in virion budding in the ER, and the newly formed immature particle is covered with 60 spikes composed of heterodimer between precursor prM and envelope protein E. The virion is transported to the Golgi apparatus where the low pH causes dissociation of PrM-E heterodimers and formation of E homodimers. prM-E cleavage is inefficient, and many virions are only partially matured. These uncleaved prM would play a role in immune evasion. Functionally, involved in immune evasion, pathogenesis and viral replication. Once cleaved off the polyprotein, is targeted to three destinations: the viral replication cycle, the plasma membrane and the extracellular compartment. Essential for viral replication. Required for formation of the replication complex and recruitment of other non-structural proteins to the ER-derived membrane structures. Excreted as a hexameric lipoparticle that plays a role against host immune response. Antagonizing the complement function. Binds to the host macrophages and dendritic cells. Inhibits signal transduction originating from Toll-like receptor 3 (TLR3). Its function is as follows. Component of the viral RNA replication complex that functions in virion assembly and antagonizes the host immune response. Required cofactor for the serine protease function of NS3. May have membrane-destabilizing activity and form viroporins. In terms of biological role, displays three enzymatic activities: serine protease, NTPase and RNA helicase. NS3 serine protease, in association with NS2B, performs its autocleavage and cleaves the polyprotein at dibasic sites in the cytoplasm: C-prM, NS2A-NS2B, NS2B-NS3, NS3-NS4A, NS4A-2K and NS4B-NS5. NS3 RNA helicase binds RNA and unwinds dsRNA in the 3' to 5' direction. Also plays a role in virus assembly. Functionally, regulates the ATPase activity of the NS3 helicase activity. NS4A allows NS3 helicase to conserve energy during unwinding. Its function is as follows. Functions as a signal peptide for NS4B and is required for the interferon antagonism activity of the latter. Induces the formation of ER-derived membrane vesicles where the viral replication takes place. Inhibits interferon (IFN)-induced host STAT1 phosphorylation and nuclear translocation, thereby preventing the establishment of cellular antiviral state by blocking the IFN-alpha/beta pathway. In terms of biological role, replicates the viral (+) and (-) RNA genome, and performs the capping of genomes in the cytoplasm. NS5 methylates viral RNA cap at guanine N-7 and ribose 2'-O positions. Besides its role in RNA genome replication, also prevents the establishment of cellular antiviral state by blocking the interferon-alpha/beta (IFN-alpha/beta) signaling pathway. IFN-I induces binding of NS5 to host IFN-activated transcription factor STAT2, preventing its transcriptional activity. Host TRIM23 is the E3 ligase that interacts with and polyubiquitinates NS5 to promote its binding to STAT2 and trigger IFN-I signaling inhibition. This Yellow fever virus (isolate Uganda/A7094A4/1948) (YFV) protein is Genome polyprotein.